We begin with the raw amino-acid sequence, 304 residues long: D-alanine--D-alanine ligase (304 aa).

The region spanning 103 to 299 (KLIWQALGLP…FADLCIEILK (197 aa)) is the ATP-grasp domain. 129–184 (EEKLGLPMFVKPAAEGSSVGVVKVKGKGRLKSVYEELKHLQGEIIAERFIGGGEYS) is a binding site for ATP. Mg(2+) is bound by residues D253, E266, and N268.

This sequence belongs to the D-alanine--D-alanine ligase family. The cofactor is Mg(2+). Mn(2+) serves as cofactor.

Its subcellular location is the cytoplasm. The catalysed reaction is 2 D-alanine + ATP = D-alanyl-D-alanine + ADP + phosphate + H(+). It participates in cell wall biogenesis; peptidoglycan biosynthesis. In terms of biological role, cell wall formation. This is D-alanine--D-alanine ligase from Neisseria meningitidis serogroup B (strain ATCC BAA-335 / MC58).